We begin with the raw amino-acid sequence, 336 residues long: Ribosomal RNA large subunit methyltransferase F (336 aa).

The span at 212-231 (HHLERSRGKPTGKGVRRVRS) shows a compositional bias: basic residues. The interval 212-234 (HHLERSRGKPTGKGVRRVRSGRM) is disordered.

This sequence belongs to the methyltransferase superfamily. METTL16/RlmF family.

It is found in the cytoplasm. It catalyses the reaction adenosine(1618) in 23S rRNA + S-adenosyl-L-methionine = N(6)-methyladenosine(1618) in 23S rRNA + S-adenosyl-L-homocysteine + H(+). In terms of biological role, specifically methylates the adenine in position 1618 of 23S rRNA. The sequence is that of Ribosomal RNA large subunit methyltransferase F from Methylobacillus flagellatus (strain ATCC 51484 / DSM 6875 / VKM B-1610 / KT).